The chain runs to 328 residues: GMP reductase (328 aa).

Residue C176 is the Thioimidate intermediate of the active site. I205 to I228 contributes to the NADP(+) binding site.

It belongs to the IMPDH/GMPR family. GuaC type 2 subfamily.

It carries out the reaction IMP + NH4(+) + NADP(+) = GMP + NADPH + 2 H(+). Functionally, catalyzes the irreversible NADPH-dependent deamination of GMP to IMP. It functions in the conversion of nucleobase, nucleoside and nucleotide derivatives of G to A nucleotides, and in maintaining the intracellular balance of A and G nucleotides. This chain is GMP reductase, found in Streptococcus pneumoniae (strain CGSP14).